We begin with the raw amino-acid sequence, 124 residues long: Replication restart protein PriB (124 aa).

In terms of domain architecture, SSB spans 12 to 112 (IDNCLILSGS…VHAEHIEFID (101 aa)).

The protein belongs to the PriB family. Homodimer. Interacts with PriA and DnaT. Component of the replication restart primosome. Primosome assembly occurs via a 'hand-off' mechanism. PriA binds to replication forks, subsequently PriB then DnaT bind; DnaT then displaces ssDNA to generate the helicase loading substrate.

In terms of biological role, involved in the restart of stalled replication forks, which reloads the replicative helicase on sites other than the origin of replication; the PriA-PriB pathway is the major replication restart pathway. During primosome assembly it facilitates complex formation between PriA and DnaT on DNA; stabilizes PriA on DNA. Stimulates the DNA unwinding activity of PriA helicase. The polypeptide is Replication restart protein PriB (Actinobacillus pleuropneumoniae serotype 5b (strain L20)).